The sequence spans 86 residues: 4-hydroxyphenylacetate decarboxylase small subunit (86 aa).

[4Fe-4S] cluster is bound by residues H3, C6, C19, C36, C45, C48, C62, and C80.

This sequence belongs to the HPA decarboxylase small subunit family. In terms of assembly, heterooctamer consisting of 4 large (HpdB) subunits and 4 small (HpdC) subunits, arranged as a tetramer of heterodimers. It depends on [4Fe-4S] cluster as a cofactor.

The enzyme catalyses 4-hydroxyphenylacetate + H(+) = 4-methylphenol + CO2. The catalysed reaction is 3,4-dihydroxyphenylacetate + H(+) = 4-methylcatechol + CO2. Functionally, component of the HPA decarboxylase that decarboxylates phenylacetates with a hydroxyl group in the p-position. Active toward 4-hydroxyphenylacetate and 3,4-dihydroxyphenylacetate, forming 4-methylphenol and 4-methylcatechol, respectively. Is likely involved in the catabolism of aromatic amino acids such as tyrosine fermentation. 4-methylphenol (p-cresol) formation provides metabolic toxicity, which allows an active suppression of other microbes and may provide growth advantages for the producers in highly competitive environments. The small subunit is essential for enzymatic activity of HPA decarboxylase, and also seems to be involved in the regulation of the enzyme oligomeric state and catalytic activity. The polypeptide is 4-hydroxyphenylacetate decarboxylase small subunit (Clostridium scatologenes).